The sequence spans 572 residues: Periplasmic pectate lyase (572 aa).

The N-terminal stretch at 1–23 is a signal peptide; it reads MKKRALLLSMSVLAMLYIPAGQA.

It belongs to the polysaccharide lyase 2 family.

The protein localises to the periplasm. The catalysed reaction is Eliminative cleavage of (1-&gt;4)-alpha-D-galacturonan to give oligosaccharides with 4-deoxy-alpha-D-galact-4-enuronosyl groups at their non-reducing ends.. Its pathway is glycan metabolism; pectin degradation; 2-dehydro-3-deoxy-D-gluconate from pectin: step 2/5. This Yersinia pseudotuberculosis serotype I (strain IP32953) protein is Periplasmic pectate lyase (pelY).